The sequence spans 563 residues: Putative cytochrome c oxidase subunit 1-beta (563 aa).

7 helical membrane-spanning segments follow: residues 34–54 (IGHL…VMAL), 76–96 (LFTL…FAGF), 117–137 (MLSY…LAVP), 164–184 (MWIM…VNFL), 208–228 (LFTS…LLVL), 252–272 (LFWF…FGII), and 284–304 (IFGY…SVVV). A Fe(II)-heme a-binding site is contributed by His-80. Cu cation is bound by residues His-258 and Tyr-262. A cross-link (1'-histidyl-3'-tyrosine (His-Tyr)) is located at residues 258–262 (HPEVY). Cu cation is bound by residues His-307 and His-308. The next 2 helical transmembrane spans lie at 309-329 (MFAT…LIAV) and 353-373 (MLWA…GVIL). His-391 lines the heme a3 pocket. The next 3 membrane-spanning stretches (helical) occupy residues 392–412 (FHYV…YFWW), 427–447 (IHFW…HWLG), and 470–490 (LSTI…YNVW). A Fe(II)-heme a-binding site is contributed by His-393. A disordered region spans residues 536-563 (AFDLHHPAHAGEAPQPEPKHEQADREPS). A compositionally biased stretch (basic and acidic residues) spans 552–563 (EPKHEQADREPS).

The protein belongs to the heme-copper respiratory oxidase family. Associates with subunits II, III and IV to form cytochrome c oxidase. It depends on Cu(2+) as a cofactor. Requires heme as cofactor.

It localises to the cell membrane. The enzyme catalyses 4 Fe(II)-[cytochrome c] + O2 + 8 H(+)(in) = 4 Fe(III)-[cytochrome c] + 2 H2O + 4 H(+)(out). Its pathway is energy metabolism; oxidative phosphorylation. Cytochrome c oxidase is the component of the respiratory chain that catalyzes the reduction of oxygen to water. Subunits 1-3 form the functional core of the enzyme complex. CO I is the catalytic subunit of the enzyme. Electrons originating in cytochrome c are transferred via the copper A center of subunit 2 and heme A of subunit 1 to the bimetallic center formed by heme A3 and copper B. The polypeptide is Putative cytochrome c oxidase subunit 1-beta (ctaD2) (Streptomyces avermitilis (strain ATCC 31267 / DSM 46492 / JCM 5070 / NBRC 14893 / NCIMB 12804 / NRRL 8165 / MA-4680)).